We begin with the raw amino-acid sequence, 309 residues long: DDRGK domain-containing protein 1 (309 aa).

Residues 1–2 are Lumenal-facing; sequence MD. The chain crosses the membrane as a helical span at residues 3-23; it reads LIILVGIAVALLVVIVTLYLL. Over 24 to 309 the chain is Cytoplasmic; the sequence is QKKNAAPETK…ISAGGGEASS (286 aa). 2 disordered regions span residues 32 to 53 and 79 to 175; these read TKVA…VPRR and ALPA…KEER. The span at 87–96 shows a compositional bias: acidic residues; that stretch reads DHEDEGQVDG. Over residues 107-175 the composition is skewed to basic and acidic residues; it reads LDEKMGAKKR…DAERLAKEER (69 aa). The stretch at 120–177 forms a coiled coil; the sequence is EAKEQKRLQREQELHDREQRKVKEAKEEAERKQQEDLEAEAERKRVDAERLAKEERER.

Belongs to the DDRGK1 family. As to quaternary structure, interacts with Atg9; the interaction is transient.

Its subcellular location is the endoplasmic reticulum membrane. Functionally, substrate adapter for ufmylation, the covalent attachment of the ubiquitin-like modifier UFM1 to substrate proteins. Required for ufmylation of Atg9; protects the nervous system during aging, possibly by stabilizing Atg9 and supporting its function. The protein is DDRGK domain-containing protein 1 of Drosophila melanogaster (Fruit fly).